A 296-amino-acid polypeptide reads, in one-letter code: Large ribosomal subunit protein uL15m (296 aa).

Residues 1-20 (MAASGGSGGKATELLRCLPR) constitute a mitochondrion transit peptide. Positions 25–66 (NLRPNPGARHREKRRGRGIHGGRKSGRGHKGETQRGNQPRLG) are disordered. Over residues 32-52 (ARHREKRRGRGIHGGRKSGRG) the composition is skewed to basic residues.

The protein belongs to the universal ribosomal protein uL15 family. In terms of assembly, component of the mitochondrial ribosome large subunit (39S) which comprises a 16S rRNA and about 50 distinct proteins.

The protein localises to the mitochondrion. The polypeptide is Large ribosomal subunit protein uL15m (mrpl15) (Xenopus laevis (African clawed frog)).